A 142-amino-acid polypeptide reads, in one-letter code: Protein spalt-accessory (142 aa).

An N-terminal signal peptide occupies residues Met1–Ala16. The segment at Gly75 to His142 is disordered. Positions Gly107–His124 are enriched in basic and acidic residues. Over residues Arg125–His142 the composition is skewed to basic residues.

Its subcellular location is the secreted. Functionally, likely to be involved in the establishment of the head. The sequence is that of Protein spalt-accessory (sala) from Drosophila melanogaster (Fruit fly).